A 240-amino-acid polypeptide reads, in one-letter code: UDP-2,3-diacylglucosamine hydrolase (240 aa).

The Mn(2+) site is built by Asp8, His10, Asp41, Asn79, and His114. Residue 79–80 (NR) participates in substrate binding. 5 residues coordinate substrate: Asp122, Ser160, Asn164, Lys167, and His195. Positions 195 and 197 each coordinate Mn(2+).

The protein belongs to the LpxH family. Mn(2+) serves as cofactor.

It is found in the cell inner membrane. The enzyme catalyses UDP-2-N,3-O-bis[(3R)-3-hydroxytetradecanoyl]-alpha-D-glucosamine + H2O = 2-N,3-O-bis[(3R)-3-hydroxytetradecanoyl]-alpha-D-glucosaminyl 1-phosphate + UMP + 2 H(+). The protein operates within glycolipid biosynthesis; lipid IV(A) biosynthesis; lipid IV(A) from (3R)-3-hydroxytetradecanoyl-[acyl-carrier-protein] and UDP-N-acetyl-alpha-D-glucosamine: step 4/6. Its function is as follows. Hydrolyzes the pyrophosphate bond of UDP-2,3-diacylglucosamine to yield 2,3-diacylglucosamine 1-phosphate (lipid X) and UMP by catalyzing the attack of water at the alpha-P atom. Involved in the biosynthesis of lipid A, a phosphorylated glycolipid that anchors the lipopolysaccharide to the outer membrane of the cell. The chain is UDP-2,3-diacylglucosamine hydrolase from Escherichia coli O17:K52:H18 (strain UMN026 / ExPEC).